A 116-amino-acid chain; its full sequence is Nucleoid-associated protein MLBr02330 (116 aa).

The segment at 96–116 (LTSAMRPTAPPPTPPTYMAGT) is disordered.

It belongs to the YbaB/EbfC family. In terms of assembly, homodimer.

It is found in the cytoplasm. It localises to the nucleoid. Binds to DNA and alters its conformation. May be involved in regulation of gene expression, nucleoid organization and DNA protection. This chain is Nucleoid-associated protein MLBr02330, found in Mycobacterium leprae (strain Br4923).